A 417-amino-acid chain; its full sequence is Serine hydroxymethyltransferase (417 aa).

(6S)-5,6,7,8-tetrahydrofolate contacts are provided by residues leucine 121 and 125 to 127 (GHL). Lysine 229 carries the N6-(pyridoxal phosphate)lysine modification. 355 to 357 (SPF) serves as a coordination point for (6S)-5,6,7,8-tetrahydrofolate.

Belongs to the SHMT family. As to quaternary structure, homodimer. The cofactor is pyridoxal 5'-phosphate.

It is found in the cytoplasm. The enzyme catalyses (6R)-5,10-methylene-5,6,7,8-tetrahydrofolate + glycine + H2O = (6S)-5,6,7,8-tetrahydrofolate + L-serine. Its pathway is one-carbon metabolism; tetrahydrofolate interconversion. It participates in amino-acid biosynthesis; glycine biosynthesis; glycine from L-serine: step 1/1. Functionally, catalyzes the reversible interconversion of serine and glycine with tetrahydrofolate (THF) serving as the one-carbon carrier. This reaction serves as the major source of one-carbon groups required for the biosynthesis of purines, thymidylate, methionine, and other important biomolecules. Also exhibits THF-independent aldolase activity toward beta-hydroxyamino acids, producing glycine and aldehydes, via a retro-aldol mechanism. The chain is Serine hydroxymethyltransferase from Tolumonas auensis (strain DSM 9187 / NBRC 110442 / TA 4).